Reading from the N-terminus, the 94-residue chain is DNA-directed RNA polymerase subunit omega (94 aa).

It belongs to the RNA polymerase subunit omega family. As to quaternary structure, the RNAP catalytic core consists of 2 alpha, 1 beta, 1 beta' and 1 omega subunit. When a sigma factor is associated with the core the holoenzyme is formed, which can initiate transcription.

It carries out the reaction RNA(n) + a ribonucleoside 5'-triphosphate = RNA(n+1) + diphosphate. Its function is as follows. Promotes RNA polymerase assembly. Latches the N- and C-terminal regions of the beta' subunit thereby facilitating its interaction with the beta and alpha subunits. The sequence is that of DNA-directed RNA polymerase subunit omega from Bifidobacterium longum (strain DJO10A).